Consider the following 909-residue polypeptide: Zinc finger and BTB domain-containing protein 41 (909 aa).

The BTB domain occupies C88–K152. The C2H2-type 1 zinc-finger motif lies at H207 to H230. A disordered region spans residues R252–V344. A compositionally biased stretch (acidic residues) spans T266–D275. Over residues N284–S295 the composition is skewed to basic and acidic residues. The span at E296–E322 shows a compositional bias: acidic residues. 13 consecutive C2H2-type zinc fingers follow at residues L361–H383, F389–H411, H422–H445, W463–H485, F491–H514, F518–H541, W547–H569, H575–H597, Y603–H625, H631–H654, H668–H690, Y696–H718, and F724–H747.

It is found in the nucleus. Functionally, may be involved in transcriptional regulation. The protein is Zinc finger and BTB domain-containing protein 41 (ZBTB41) of Homo sapiens (Human).